A 346-amino-acid polypeptide reads, in one-letter code: S-adenosylmethionine:tRNA ribosyltransferase-isomerase (346 aa).

This sequence belongs to the QueA family. Monomer.

It is found in the cytoplasm. It carries out the reaction 7-aminomethyl-7-carbaguanosine(34) in tRNA + S-adenosyl-L-methionine = epoxyqueuosine(34) in tRNA + adenine + L-methionine + 2 H(+). It participates in tRNA modification; tRNA-queuosine biosynthesis. In terms of biological role, transfers and isomerizes the ribose moiety from AdoMet to the 7-aminomethyl group of 7-deazaguanine (preQ1-tRNA) to give epoxyqueuosine (oQ-tRNA). This is S-adenosylmethionine:tRNA ribosyltransferase-isomerase from Shewanella denitrificans (strain OS217 / ATCC BAA-1090 / DSM 15013).